The primary structure comprises 138 residues: Large ribosomal subunit protein bL17 (138 aa).

Belongs to the bacterial ribosomal protein bL17 family. Part of the 50S ribosomal subunit. Contacts protein L32.

The protein is Large ribosomal subunit protein bL17 of Methylorubrum extorquens (strain PA1) (Methylobacterium extorquens).